The following is a 598-amino-acid chain: Probable polysaccharide biosynthesis protein EpsC (598 aa).

4 consecutive transmembrane segments (helical) span residues 1–21 (MIIA…YQFL), 31–51 (GALL…AFLF), 63–83 (LGEL…TGVI), and 87–107 (VYHT…LLSI).

Belongs to the polysaccharide synthase family.

It localises to the cell membrane. Involved in biofilm formation. In Bacillus subtilis (strain 168), this protein is Probable polysaccharide biosynthesis protein EpsC (epsC).